Consider the following 195-residue polypeptide: Thymidine kinase (195 aa).

Residues 15–22 (GSMFSGKS) and 88–91 (DEVQ) contribute to the ATP site. The active-site Proton acceptor is the glutamate 89. Positions 145, 148, 183, and 186 each coordinate Zn(2+).

The protein belongs to the thymidine kinase family. In terms of assembly, homotetramer.

It is found in the cytoplasm. It catalyses the reaction thymidine + ATP = dTMP + ADP + H(+). The polypeptide is Thymidine kinase (Bacillus cereus (strain ZK / E33L)).